The primary structure comprises 277 residues: Energy-coupling factor transporter ATP-binding protein EcfA (277 aa).

An ABC transporter domain is found at 4-238 (LETRDLTHIY…PELLTQTRLD (235 aa)). 37-44 (GPNGAGKS) is an ATP binding site.

Belongs to the ABC transporter superfamily. Energy-coupling factor EcfA family. Forms a stable energy-coupling factor (ECF) transporter complex composed of 2 membrane-embedded substrate-binding proteins (S component), 2 ATP-binding proteins (A component) and 2 transmembrane proteins (T component).

It is found in the cell membrane. In terms of biological role, ATP-binding (A) component of a common energy-coupling factor (ECF) ABC-transporter complex. Unlike classic ABC transporters this ECF transporter provides the energy necessary to transport a number of different substrates. The polypeptide is Energy-coupling factor transporter ATP-binding protein EcfA (Methanoculleus marisnigri (strain ATCC 35101 / DSM 1498 / JR1)).